We begin with the raw amino-acid sequence, 257 residues long: Small ribosomal subunit protein uS2 (257 aa).

Residues 229–257 are disordered; the sequence is QFTPATTSSQEVDKASEQVEIAADDIDEE.

The protein belongs to the universal ribosomal protein uS2 family.

The protein is Small ribosomal subunit protein uS2 of Caldicellulosiruptor bescii (strain ATCC BAA-1888 / DSM 6725 / KCTC 15123 / Z-1320) (Anaerocellum thermophilum).